The sequence spans 94 residues: Large ribosomal subunit protein bL27 (94 aa).

The propeptide occupies M1–F9.

This sequence belongs to the bacterial ribosomal protein bL27 family. Post-translationally, the N-terminus is cleaved by ribosomal processing cysteine protease Prp.

The sequence is that of Large ribosomal subunit protein bL27 from Staphylococcus haemolyticus (strain JCSC1435).